The chain runs to 282 residues: Probable septum site-determining protein MinC (282 aa).

Residues 103 to 147 (SQSRRGGKDEAPKEKAGKPEATAASGQTDAEAAGNTGKGKDSEGA) form a disordered region. Residues 104 to 120 (QSRRGGKDEAPKEKAGK) show a composition bias toward basic and acidic residues.

It belongs to the MinC family. As to quaternary structure, interacts with MinD and FtsZ.

In terms of biological role, cell division inhibitor that blocks the formation of polar Z ring septums. Rapidly oscillates between the poles of the cell to destabilize FtsZ filaments that have formed before they mature into polar Z rings. Prevents FtsZ polymerization. In Cupriavidus metallidurans (strain ATCC 43123 / DSM 2839 / NBRC 102507 / CH34) (Ralstonia metallidurans), this protein is Probable septum site-determining protein MinC.